The following is a 154-amino-acid chain: Superoxide dismutase [Cu-Zn] (154 aa).

Positions 47, 49, and 64 each coordinate Cu cation. Cys58 and Cys147 form a disulfide bridge. Positions 64, 72, 81, and 84 each coordinate Zn(2+). His121 lines the Cu cation pocket. The segment covering 124–137 (TDDLGKGENEESKK) has biased composition (basic and acidic residues). Residues 124–144 (TDDLGKGENEESKKTGNAGTR) are disordered. Arg144 contributes to the substrate binding site.

This sequence belongs to the Cu-Zn superoxide dismutase family. As to quaternary structure, homodimer. Cu cation serves as cofactor. Zn(2+) is required as a cofactor.

It is found in the cytoplasm. It catalyses the reaction 2 superoxide + 2 H(+) = H2O2 + O2. Its function is as follows. Destroys radicals which are normally produced within the cells and which are toxic to biological systems. The polypeptide is Superoxide dismutase [Cu-Zn] (sod1) (Botryotinia fuckeliana (Noble rot fungus)).